Consider the following 311-residue polypeptide: Dihydroorotate dehydrogenase A (fumarate) (311 aa).

FMN-binding positions include Ser-19 and Lys-43–Ser-44. Substrate contacts are provided by residues Lys-43, Asn-67–Leu-71, and Asn-127. Asn-127 lines the FMN pocket. Cys-130 serves as the catalytic Nucleophile. Residues Lys-164 and Val-192 each contribute to the FMN site. Asn-193–Ser-194 contributes to the substrate binding site. Residues Gly-221, Gly-249 to Gly-250, and Gly-271 to Thr-272 contribute to the FMN site.

The protein belongs to the dihydroorotate dehydrogenase family. Type 1 subfamily. As to quaternary structure, homodimer. The cofactor is FMN.

It is found in the cytoplasm. The enzyme catalyses (S)-dihydroorotate + fumarate = orotate + succinate. Its pathway is pyrimidine metabolism; UMP biosynthesis via de novo pathway. Its function is as follows. Catalyzes the conversion of dihydroorotate to orotate with fumarate as the electron acceptor. The sequence is that of Dihydroorotate dehydrogenase A (fumarate) (pyrDA) from Lactococcus lactis subsp. cremoris (Streptococcus cremoris).